The primary structure comprises 434 residues: Tubulin gamma chain (434 aa).

Position 135–141 (135–141 (AGGTGSG)) interacts with GTP.

Belongs to the tubulin family.

It localises to the cytoplasm. Its subcellular location is the cytoskeleton. The protein localises to the microtubule organizing center. It is found in the spindle pole body. Tubulin is the major constituent of microtubules. The gamma chain is found at microtubule organizing centers (MTOC) such as the spindle poles or the centrosome, suggesting that it is involved in the minus-end nucleation of microtubule assembly. The sequence is that of Tubulin gamma chain (TUB4) from Encephalitozoon cuniculi (strain GB-M1) (Microsporidian parasite).